The following is a 109-amino-acid chain: Fluoride-specific ion channel FluC 1 (109 aa).

3 helical membrane passes run 21-41, 52-72, and 83-103; these read FYFK…GFFI, ILFS…HFLY, and LFIY…IGFQ.

Belongs to the fluoride channel Fluc/FEX (TC 1.A.43) family.

It is found in the cell inner membrane. The enzyme catalyses fluoride(in) = fluoride(out). In terms of biological role, fluoride-specific ion channel. Important for reducing fluoride concentration in the cell, thus reducing its toxicity. The polypeptide is Fluoride-specific ion channel FluC 1 (Prochlorococcus marinus subsp. pastoris (strain CCMP1986 / NIES-2087 / MED4)).